The chain runs to 335 residues: Nucleoid-associated protein PP_0973 (335 aa).

Belongs to the YejK family.

The protein resides in the cytoplasm. The protein localises to the nucleoid. The polypeptide is Nucleoid-associated protein PP_0973 (Pseudomonas putida (strain ATCC 47054 / DSM 6125 / CFBP 8728 / NCIMB 11950 / KT2440)).